A 267-amino-acid chain; its full sequence is Acyl-[acyl-carrier-protein]--UDP-N-acetylglucosamine O-acyltransferase (267 aa).

The protein belongs to the transferase hexapeptide repeat family. LpxA subfamily. As to quaternary structure, homotrimer.

The protein resides in the cytoplasm. The enzyme catalyses a (3R)-hydroxyacyl-[ACP] + UDP-N-acetyl-alpha-D-glucosamine = a UDP-3-O-[(3R)-3-hydroxyacyl]-N-acetyl-alpha-D-glucosamine + holo-[ACP]. Its pathway is glycolipid biosynthesis; lipid IV(A) biosynthesis; lipid IV(A) from (3R)-3-hydroxytetradecanoyl-[acyl-carrier-protein] and UDP-N-acetyl-alpha-D-glucosamine: step 1/6. Involved in the biosynthesis of lipid A, a phosphorylated glycolipid that anchors the lipopolysaccharide to the outer membrane of the cell. The chain is Acyl-[acyl-carrier-protein]--UDP-N-acetylglucosamine O-acyltransferase from Hamiltonella defensa subsp. Acyrthosiphon pisum (strain 5AT).